The sequence spans 292 residues: Ribosomal RNA small subunit methyltransferase A (292 aa).

Residues N46, L48, G73, E94, D118, and N136 each contribute to the S-adenosyl-L-methionine site.

This sequence belongs to the class I-like SAM-binding methyltransferase superfamily. rRNA adenine N(6)-methyltransferase family. RsmA subfamily.

It is found in the cytoplasm. It catalyses the reaction adenosine(1518)/adenosine(1519) in 16S rRNA + 4 S-adenosyl-L-methionine = N(6)-dimethyladenosine(1518)/N(6)-dimethyladenosine(1519) in 16S rRNA + 4 S-adenosyl-L-homocysteine + 4 H(+). In terms of biological role, specifically dimethylates two adjacent adenosines (A1518 and A1519) in the loop of a conserved hairpin near the 3'-end of 16S rRNA in the 30S particle. May play a critical role in biogenesis of 30S subunits. The protein is Ribosomal RNA small subunit methyltransferase A of Deinococcus radiodurans (strain ATCC 13939 / DSM 20539 / JCM 16871 / CCUG 27074 / LMG 4051 / NBRC 15346 / NCIMB 9279 / VKM B-1422 / R1).